The following is a 1046-amino-acid chain: Inner tegument protein (1046 aa).

Residues Trp543–Ala1046 form an interaction with large tegument protein region.

The protein belongs to the herpesviridae inner tegument protein family. In terms of assembly, interacts (via C-terminus) with the large tegument protein/LTP (via N-terminus).

It is found in the virion tegument. Its subcellular location is the host cytoplasm. It localises to the host nucleus. The protein localises to the host Golgi apparatus. The protein resides in the host trans-Golgi network. Plays an essential role in cytoplasmic secondary envelopment during viral egress. Interacts with the capsid via the large tegument protein/LTP and participates in its transport to the host trans-Golgi network (TGN) where secondary envelopment occurs. Modulates tegumentation and capsid accumulation at the viral assembly complex. This Gallid herpesvirus 2 (strain Chicken/Md5/ATCC VR-987) (GaHV-2) protein is Inner tegument protein (MDV050).